A 194-amino-acid chain; its full sequence is Ras-related protein Rab-22A (194 aa).

GTP is bound at residue 12–20 (GDTGVGKSS). An Effector region motif is present at residues 34–42 (INPTIGASF). Residues 60 to 64 (DTAGQ), 118 to 121 (NKCD), and 148 to 150 (SAK) each bind GTP. Residues 170 to 194 (DANPPSGGKGFKLRRQPSEPQRSCC) form a disordered region. 2 S-geranylgeranyl cysteine lipidation sites follow: Cys193 and Cys194.

Belongs to the small GTPase superfamily. Rab family. In terms of assembly, interacts directly with ZFYVE20. Interacts (in its GTP-bound form) with RINL and RABGEF1. Binds EEA1.

The protein resides in the endosome membrane. The protein localises to the cell membrane. It localises to the early endosome. It is found in the late endosome. Its subcellular location is the cell projection. The protein resides in the ruffle. The protein localises to the cytoplasmic vesicle. It localises to the phagosome. It is found in the phagosome membrane. Functionally, plays a role in endocytosis and intracellular protein transport. Mediates trafficking of TF from early endosomes to recycling endosomes. Required for NGF-mediated endocytosis of NTRK1, and subsequent neurite outgrowth. Binds GTP and GDP and has low GTPase activity. Alternates between a GTP-bound active form and a GDP-bound inactive form. The chain is Ras-related protein Rab-22A (RAB22A) from Canis lupus familiaris (Dog).